A 122-amino-acid chain; its full sequence is UPF0102 protein XCV0816 (122 aa).

This sequence belongs to the UPF0102 family.

The protein is UPF0102 protein XCV0816 of Xanthomonas euvesicatoria pv. vesicatoria (strain 85-10) (Xanthomonas campestris pv. vesicatoria).